Consider the following 389-residue polypeptide: tRNA-specific 2-thiouridylase MnmA (389 aa).

Residues 35–42 and methionine 61 contribute to the ATP site; that span reads GMSGGVDS. Residues 121 to 123 are interaction with target base in tRNA; sequence NPD. Catalysis depends on cysteine 126, which acts as the Nucleophile. Cysteine 126 and cysteine 223 form a disulfide bridge. Glycine 151 lines the ATP pocket. The interval 173–175 is interaction with tRNA; it reads KDQ. The Cysteine persulfide intermediate role is filled by cysteine 223. Positions 335 to 336 are interaction with tRNA; it reads RY.

The protein belongs to the MnmA/TRMU family.

The protein resides in the cytoplasm. The enzyme catalyses S-sulfanyl-L-cysteinyl-[protein] + uridine(34) in tRNA + AH2 + ATP = 2-thiouridine(34) in tRNA + L-cysteinyl-[protein] + A + AMP + diphosphate + H(+). Its function is as follows. Catalyzes the 2-thiolation of uridine at the wobble position (U34) of tRNA, leading to the formation of s(2)U34. In Actinobacillus succinogenes (strain ATCC 55618 / DSM 22257 / CCUG 43843 / 130Z), this protein is tRNA-specific 2-thiouridylase MnmA.